Reading from the N-terminus, the 251-residue chain is Mediator of RNA polymerase II transcription subunit 7 (251 aa).

The segment at 1–38 (MLPGFGAQTVSPFPNPPEYASAYTSDRINNGSAPPPPH) is disordered. Residues 22–32 (AYTSDRINNGS) are compositionally biased toward polar residues.

This sequence belongs to the Mediator complex subunit 7 family. As to quaternary structure, component of the Mediator complex. Interacts with mdt-10 and mdt-21. Interacts with RNA polymerase II.

It is found in the nucleus. In terms of biological role, component of the Mediator complex, a coactivator involved in the regulated transcription of nearly all RNA polymerase II-dependent genes. Mediator functions as a bridge to convey information from gene-specific regulatory proteins to the basal RNA polymerase II transcription machinery. Mediator is recruited to promoters by direct interactions with regulatory proteins and serves as a scaffold for the assembly of a functional preinitiation complex with RNA polymerase II and the general transcription factors. Required for germ cell development and gonadal growth. The sequence is that of Mediator of RNA polymerase II transcription subunit 7 (let-49) from Caenorhabditis elegans.